The chain runs to 66 residues: Large ribosomal subunit protein bL33c (66 aa).

This sequence belongs to the bacterial ribosomal protein bL33 family.

Its subcellular location is the plastid. It is found in the chloroplast. This chain is Large ribosomal subunit protein bL33c, found in Adiantum capillus-veneris (Maidenhair fern).